Here is a 170-residue protein sequence, read N- to C-terminus: Adenine phosphoribosyltransferase (170 aa).

It belongs to the purine/pyrimidine phosphoribosyltransferase family. In terms of assembly, homodimer.

Its subcellular location is the cytoplasm. The catalysed reaction is AMP + diphosphate = 5-phospho-alpha-D-ribose 1-diphosphate + adenine. Its pathway is purine metabolism; AMP biosynthesis via salvage pathway; AMP from adenine: step 1/1. Its function is as follows. Catalyzes a salvage reaction resulting in the formation of AMP, that is energically less costly than de novo synthesis. The chain is Adenine phosphoribosyltransferase from Oceanobacillus iheyensis (strain DSM 14371 / CIP 107618 / JCM 11309 / KCTC 3954 / HTE831).